The primary structure comprises 251 residues: uncharacterized protein (251 aa).

The N-terminal stretch at 1–19 is a signal peptide; the sequence is MRYLKRITIYISLLILVSG. Residue C20 is the site of N-palmitoyl cysteine attachment. C20 carries S-diacylglycerol cysteine lipidation.

It belongs to the staphylococcal tandem lipoprotein family.

It is found in the cell membrane. This is an uncharacterized protein from Staphylococcus epidermidis (strain ATCC 12228 / FDA PCI 1200).